A 276-amino-acid chain; its full sequence is Large ribosomal subunit protein uL2 (276 aa).

Positions 223-276 (VVMNPVDHPHGGGEGKSSGGRHPVSPWGKKTRGPKTRNNKVTDRLIIRRRNAKR) are disordered. Residues 251–260 (KKTRGPKTRN) are compositionally biased toward basic residues.

This sequence belongs to the universal ribosomal protein uL2 family. As to quaternary structure, part of the 50S ribosomal subunit. Forms a bridge to the 30S subunit in the 70S ribosome.

Functionally, one of the primary rRNA binding proteins. Required for association of the 30S and 50S subunits to form the 70S ribosome, for tRNA binding and peptide bond formation. It has been suggested to have peptidyltransferase activity; this is somewhat controversial. Makes several contacts with the 16S rRNA in the 70S ribosome. The sequence is that of Large ribosomal subunit protein uL2 from Hyphomonas neptunium (strain ATCC 15444).